A 243-amino-acid chain; its full sequence is HTH-type transcriptional regulator MlrA (243 aa).

One can recognise an HTH merR-type domain in the interval 3 to 72; sequence LYTIGEVALL…VSKVKVLLSS (70 aa). A DNA-binding region (H-T-H motif) is located at residues 6-25; it reads IGEVALLCDINPVTLRAWQR.

In terms of biological role, transcriptional activator of csgD, which is required for production of the curli (AgF). This Salmonella typhimurium (strain SL1344) protein is HTH-type transcriptional regulator MlrA.